The sequence spans 462 residues: Protein Tube (462 aa).

The 126-residue stretch at Tyr27 to Phe152 folds into the Death domain. A disordered region spans residues Arg218–Asn265. Low complexity predominate over residues Thr249–Thr259. A run of 2 repeats spans residues Asn262–Leu269 and Asn286–Leu293. Positions Asn262–Leu460 are 5 X approximate repeats. The segment covering Arg301–Pro317 has biased composition (polar residues). Positions Arg301 to Gln462 are disordered. Copy 3 of the repeat occupies Asn319 to Leu326. The span at Ala342 to Ser354 shows a compositional bias: low complexity. Positions Asn355–Lys367 are enriched in polar residues. Repeat 4 spans residues Asn356–Leu363. The span at Gly368–Ser377 shows a compositional bias: basic and acidic residues. The segment covering Asp387–Pro403 has biased composition (acidic residues). Over residues Asn409–Leu424 the composition is skewed to low complexity. Polar residues predominate over residues Thr425 to Leu438. Residues Thr439–Asp449 are compositionally biased toward low complexity. Copy 5 of the repeat occupies Asn453–Leu460.

As to quaternary structure, interacts (via Death domain) with pll (via Death domain). Phosphorylated by pll.

It localises to the cytoplasm. Its subcellular location is the cell membrane. Functionally, plays an essential role in the Tl receptor signaling pathway that establishes embryonic dorsoventral polarity; the signal directs import of dl into ventral and ventrolateral nuclei, thereby establishing dorsoventral polarity. Tub recruits pll to the plasma membrane and protein-protein interaction activates pll. Also has a role in pupal pattern formation. This chain is Protein Tube (tub), found in Drosophila melanogaster (Fruit fly).